The following is a 444-amino-acid chain: Cholecystokinin receptor type A (444 aa).

At 1 to 56 the chain is on the extracellular side; the sequence is MSHSPARQHLVESSRMDVVDSLLMNGSNITPPCELGLENETLFCLDQPQPSKEWQS. N-linked (GlcNAc...) asparagine glycans are attached at residues Asn25 and Asn39. Cys33 and Cys44 are disulfide-bonded. Residues 57 to 82 form a helical membrane-spanning segment; the sequence is ALQILLYSIIFLLSVLGNTLVITVLI. Over 83–92 the chain is Cytoplasmic; sequence RNKRMRTVTN. A helical transmembrane segment spans residues 93-119; that stretch reads IFLLSLAVSDLMLCLFCMPFNLIPNLL. Topologically, residues 120–130 are extracellular; it reads KDFIFGSAVCK. Cysteines 129 and 211 form a disulfide. Residues 131 to 152 form a helical membrane-spanning segment; the sequence is TTTYFMGTSVSVSTFNLVAISL. Over 153-172 the chain is Cytoplasmic; sequence ERYGAICRPLQSRVWQTKSH. A helical transmembrane segment spans residues 173–193; that stretch reads ALKVIAATWCLSFTIMTPYPI. The Extracellular portion of the chain corresponds to 194–225; it reads YSNLVPFTKNNNQTANMCRFLLPSDAMQQSWQ. A glycan (N-linked (GlcNAc...) asparagine) is linked at Asn205. Residues 226-249 traverse the membrane as a helical segment; the sequence is TFLLLILFLLPGIVMVVAYGLISL. The Cytoplasmic segment spans residues 250-329; it reads ELYQGIKFDA…NLIAKKRVIR (80 aa). Positions 263-288 are disordered; that stretch reads KSAKEKKPSTGSSTRYEDSDGCYLQK. Residues 330–350 form a helical membrane-spanning segment; sequence MLIVIVVLFFLCWMPIFSANA. Topologically, residues 351–365 are extracellular; that stretch reads WRAYDTVSAEKHLSG. Residues 366–389 form a helical membrane-spanning segment; it reads TPISFILLLSYTSSCVNPIIYCFM. Residues 390-444 are Cytoplasmic-facing; sequence NKRFRLGFMATFPCCPNPGPPGVRGEVGEEEDGRTIRALLSRYSYSHMSTSAPPP. Residue Cys403 is the site of S-palmitoyl cysteine attachment.

This sequence belongs to the G-protein coupled receptor 1 family. Pancreas and brain. Also expressed in the gastrointestinal system and vagus nerve.

It is found in the cell membrane. Receptor for cholecystokinin. Mediates pancreatic growth and enzyme secretion, smooth muscle contraction of the gall bladder and stomach. Has a 1000-fold higher affinity for CCK rather than for gastrin. It modulates feeding and dopamine-induced behavior in the central and peripheral nervous system. This receptor mediates its action by association with G proteins that activate a phosphatidylinositol-calcium second messenger system. The sequence is that of Cholecystokinin receptor type A (Cckar) from Rattus norvegicus (Rat).